An 82-amino-acid chain; its full sequence is Putative membrane protein insertion efficiency factor (82 aa).

The interval 63 to 82 is disordered; it reads PGGHDPVPESTILSKEKSVK.

The protein belongs to the UPF0161 family.

The protein localises to the cell inner membrane. Its function is as follows. Could be involved in insertion of integral membrane proteins into the membrane. This Protochlamydia amoebophila (strain UWE25) protein is Putative membrane protein insertion efficiency factor.